A 261-amino-acid chain; its full sequence is tRNA pseudouridine synthase A (261 aa).

Asp-51 acts as the Nucleophile in catalysis. Tyr-109 lines the substrate pocket.

The protein belongs to the tRNA pseudouridine synthase TruA family. As to quaternary structure, homodimer.

The catalysed reaction is uridine(38/39/40) in tRNA = pseudouridine(38/39/40) in tRNA. In terms of biological role, formation of pseudouridine at positions 38, 39 and 40 in the anticodon stem and loop of transfer RNAs. This chain is tRNA pseudouridine synthase A, found in Tolumonas auensis (strain DSM 9187 / NBRC 110442 / TA 4).